A 404-amino-acid polypeptide reads, in one-letter code: Probable tRNA sulfurtransferase (404 aa).

Positions 60-165 (RSVIEALKPV…DEAAYLSHED (106 aa)) constitute a THUMP domain. Residues 183–184 (ML), 208–209 (HF), R265, G287, and Q296 each bind ATP.

It belongs to the ThiI family.

It localises to the cytoplasm. The catalysed reaction is [ThiI sulfur-carrier protein]-S-sulfanyl-L-cysteine + a uridine in tRNA + 2 reduced [2Fe-2S]-[ferredoxin] + ATP + H(+) = [ThiI sulfur-carrier protein]-L-cysteine + a 4-thiouridine in tRNA + 2 oxidized [2Fe-2S]-[ferredoxin] + AMP + diphosphate. The enzyme catalyses [ThiS sulfur-carrier protein]-C-terminal Gly-Gly-AMP + S-sulfanyl-L-cysteinyl-[cysteine desulfurase] + AH2 = [ThiS sulfur-carrier protein]-C-terminal-Gly-aminoethanethioate + L-cysteinyl-[cysteine desulfurase] + A + AMP + 2 H(+). It participates in cofactor biosynthesis; thiamine diphosphate biosynthesis. Its function is as follows. Catalyzes the ATP-dependent transfer of a sulfur to tRNA to produce 4-thiouridine in position 8 of tRNAs, which functions as a near-UV photosensor. Also catalyzes the transfer of sulfur to the sulfur carrier protein ThiS, forming ThiS-thiocarboxylate. This is a step in the synthesis of thiazole, in the thiamine biosynthesis pathway. The sulfur is donated as persulfide by IscS. The polypeptide is Probable tRNA sulfurtransferase (Streptococcus equi subsp. zooepidemicus (strain H70)).